A 132-amino-acid polypeptide reads, in one-letter code: MRFTKVVGFLSVLGLAAVFPLTAQAEKAGTAGAGEWDKLGTYTYTYSSPTVYSTGGDFRVCLSGSTPFSVSLHLYEDDPGDNPDDYVGANYFSPGECHTFGSIGKFVDGSNNKAEFFVTDYSGKSKTVTFYD.

Positions 1–25 are cleaved as a signal peptide; sequence MRFTKVVGFLSVLGLAAVFPLTAQA.

This is an uncharacterized protein from Bacillus subtilis (strain 168).